We begin with the raw amino-acid sequence, 219 residues long: N-(5'-phosphoribosyl)anthranilate isomerase (219 aa).

It belongs to the TrpF family.

The catalysed reaction is N-(5-phospho-beta-D-ribosyl)anthranilate = 1-(2-carboxyphenylamino)-1-deoxy-D-ribulose 5-phosphate. Its pathway is amino-acid biosynthesis; L-tryptophan biosynthesis; L-tryptophan from chorismate: step 3/5. This Bordetella avium (strain 197N) protein is N-(5'-phosphoribosyl)anthranilate isomerase.